A 135-amino-acid polypeptide reads, in one-letter code: Ribonuclease P protein component (135 aa).

Belongs to the RnpA family. As to quaternary structure, consists of a catalytic RNA component (M1 or rnpB) and a protein subunit.

The catalysed reaction is Endonucleolytic cleavage of RNA, removing 5'-extranucleotides from tRNA precursor.. Its function is as follows. RNaseP catalyzes the removal of the 5'-leader sequence from pre-tRNA to produce the mature 5'-terminus. It can also cleave other RNA substrates such as 4.5S RNA. The protein component plays an auxiliary but essential role in vivo by binding to the 5'-leader sequence and broadening the substrate specificity of the ribozyme. This chain is Ribonuclease P protein component, found in Saccharophagus degradans (strain 2-40 / ATCC 43961 / DSM 17024).